We begin with the raw amino-acid sequence, 347 residues long: tRNA N6-adenosine threonylcarbamoyltransferase (347 aa).

The Fe cation site is built by H115 and H119. Substrate contacts are provided by residues 137 to 141 (LASGG), D170, G183, and N281. Residue D309 participates in Fe cation binding.

It belongs to the KAE1 / TsaD family. Fe(2+) serves as cofactor.

It localises to the cytoplasm. It catalyses the reaction L-threonylcarbamoyladenylate + adenosine(37) in tRNA = N(6)-L-threonylcarbamoyladenosine(37) in tRNA + AMP + H(+). Required for the formation of a threonylcarbamoyl group on adenosine at position 37 (t(6)A37) in tRNAs that read codons beginning with adenine. Is involved in the transfer of the threonylcarbamoyl moiety of threonylcarbamoyl-AMP (TC-AMP) to the N6 group of A37, together with TsaE and TsaB. TsaD likely plays a direct catalytic role in this reaction. The sequence is that of tRNA N6-adenosine threonylcarbamoyltransferase from Methylorubrum populi (strain ATCC BAA-705 / NCIMB 13946 / BJ001) (Methylobacterium populi).